The sequence spans 1169 residues: ATP-dependent helicase/deoxyribonuclease subunit B (1169 aa).

Residues 1–285 (MEIQFLAGRS…TIFERNHRHL (285 aa)) enclose the UvrD-like helicase ATP-binding domain. 8–15 (GRSGSGKT) is an ATP binding site. Residues 280 to 586 (RNHRHLYTPD…KFALIPPSLD (307 aa)) form the UvrD-like helicase C-terminal domain. [4Fe-4S] cluster-binding residues include Cys801, Cys1121, Cys1124, and Cys1130.

Belongs to the helicase family. AddB/RexB type 1 subfamily. As to quaternary structure, heterodimer of AddA and AddB. It depends on Mg(2+) as a cofactor. The cofactor is [4Fe-4S] cluster.

The heterodimer acts as both an ATP-dependent DNA helicase and an ATP-dependent, dual-direction single-stranded exonuclease. Recognizes the chi site generating a DNA molecule suitable for the initiation of homologous recombination. The AddB subunit has 5' -&gt; 3' nuclease activity but not helicase activity. The protein is ATP-dependent helicase/deoxyribonuclease subunit B of Bacillus pumilus (strain SAFR-032).